The chain runs to 131 residues: Sec-independent protein translocase protein TatB (131 aa).

Residues 1 to 21 (MFDISFAELVVVGIVALIVIG) traverse the membrane as a helical segment. 2 stretches are compositionally biased toward polar residues: residues 71-93 (NSFE…TQSA) and 111-131 (PVNT…QPNS). The segment at 71 to 131 (NSFENSVRSE…APAEPRQPNS (61 aa)) is disordered.

The protein belongs to the TatB family. In terms of assembly, the Tat system comprises two distinct complexes: a TatABC complex, containing multiple copies of TatA, TatB and TatC subunits, and a separate TatA complex, containing only TatA subunits. Substrates initially bind to the TatABC complex, which probably triggers association of the separate TatA complex to form the active translocon.

It localises to the cell inner membrane. Functionally, part of the twin-arginine translocation (Tat) system that transports large folded proteins containing a characteristic twin-arginine motif in their signal peptide across membranes. Together with TatC, TatB is part of a receptor directly interacting with Tat signal peptides. TatB may form an oligomeric binding site that transiently accommodates folded Tat precursor proteins before their translocation. This Nitrosomonas europaea (strain ATCC 19718 / CIP 103999 / KCTC 2705 / NBRC 14298) protein is Sec-independent protein translocase protein TatB.